The following is a 63-amino-acid chain: Large ribosomal subunit protein bL35 (63 aa).

2 stretches are compositionally biased toward basic residues: residues 1–25 (MPKM…KHRQ) and 32–47 (LTKK…RPKK). The interval 1 to 55 (MPKMKSKSSAAKRFKKTANGFKHRQSFTSHILTKKSTKRKRHLRPKKQVNPSDVP) is disordered.

This sequence belongs to the bacterial ribosomal protein bL35 family.

This Hahella chejuensis (strain KCTC 2396) protein is Large ribosomal subunit protein bL35.